The sequence spans 158 residues: NAD(P)H-quinone oxidoreductase subunit J, chloroplastic (158 aa).

The protein belongs to the complex I 30 kDa subunit family. In terms of assembly, NDH is composed of at least 16 different subunits, 5 of which are encoded in the nucleus.

Its subcellular location is the plastid. It is found in the chloroplast thylakoid membrane. It carries out the reaction a plastoquinone + NADH + (n+1) H(+)(in) = a plastoquinol + NAD(+) + n H(+)(out). The catalysed reaction is a plastoquinone + NADPH + (n+1) H(+)(in) = a plastoquinol + NADP(+) + n H(+)(out). NDH shuttles electrons from NAD(P)H:plastoquinone, via FMN and iron-sulfur (Fe-S) centers, to quinones in the photosynthetic chain and possibly in a chloroplast respiratory chain. The immediate electron acceptor for the enzyme in this species is believed to be plastoquinone. Couples the redox reaction to proton translocation, and thus conserves the redox energy in a proton gradient. The chain is NAD(P)H-quinone oxidoreductase subunit J, chloroplastic from Liriodendron tulipifera (Tuliptree).